A 385-amino-acid polypeptide reads, in one-letter code: SWI/SNF-related matrix-associated actin-dependent regulator of chromatin subfamily B member 1 (385 aa).

Residues 1-113 (MMMMALSKTF…DEKYKAVSIS (113 aa)) form a DNA-binding region. Residues Lys-106, Lys-108, and Lys-124 each participate in a glycyl lysine isopeptide (Lys-Gly) (interchain with G-Cter in SUMO2) cross-link. The residue at position 129 (Ser-129) is a Phosphoserine. A Glycyl lysine isopeptide (Lys-Gly) (interchain with G-Cter in SUMO2) cross-link involves residue Lys-161. An HIV-1 integrase-binding region spans residues 183-243 (PEVLVPIRLD…VPAIASAIRQ (61 aa)). A run of 2 repeats spans residues 186 to 245 (LVPI…RQQI) and 259 to 319 (DQRV…RGQL). Residues 186–245 (LVPIRLDMEIDGQKLRDAFTWNMNEKLMTPEMFSEILCDDLDLNPLTFVPAIASAIRQQI) are MYC-binding. The segment at 186–319 (LVPIRLDMEI…TIAYSIRGQL (134 aa)) is 2 X approximate tandem repeats. Positions 304–318 (GGEFVTTIAYSIRGQ) are interaction with PPP1R15A.

This sequence belongs to the SNF5 family. As to quaternary structure, component of the multiprotein chromatin-remodeling complexes SWI/SNF: SWI/SNF-A (BAF), SWI/SNF-B (PBAF) and related complexes. The canonical complex contains a catalytic subunit (either SMARCA4/BRG1/BAF190A or SMARCA2/BRM/BAF190B) and at least SMARCE1, ACTL6A/BAF53, SMARCC1/BAF155, SMARCC2/BAF170, and SMARCB1/SNF5/BAF47. Other subunits specific to each of the complexes may also be present permitting several possible combinations developmentally and tissue specific. Component of the BAF complex, which includes at least actin (ACTB), ARID1A/BAF250A, ARID1B/BAF250B, SMARCA2/BRM, SMARCA4/BRG1/BAF190A, ACTL6A/BAF53, ACTL6B/BAF53B, SMARCE1/BAF57 SMARCC1/BAF155, SMARCC2/BAF170, SMARCB1/SNF5/INI1, and one or more SMARCD1/BAF60A, SMARCD2/BAF60B, or SMARCD3/BAF60C. In muscle cells, the BAF complex also contains DPF3. Component of neural progenitors-specific chromatin remodeling complex (npBAF complex) composed of at least, ARID1A/BAF250A or ARID1B/BAF250B, SMARCD1/BAF60A, SMARCD3/BAF60C, SMARCA2/BRM/BAF190B, SMARCA4/BRG1/BAF190A, SMARCB1/BAF47, SMARCC1/BAF155, SMARCE1/BAF57, SMARCC2/BAF170, PHF10/BAF45A, ACTL6A/BAF53A and actin. Component of neuron-specific chromatin remodeling complex (nBAF complex) composed of at least, ARID1A/BAF250A or ARID1B/BAF250B, SMARCD1/BAF60A, SMARCD3/BAF60C, SMARCA2/BRM/BAF190B, SMARCA4/BRG1/BAF190A, SMARCB1/BAF47, SMARCC1/BAF155, SMARCE1/BAF57, SMARCC2/BAF170, DPF1/BAF45B, DPF3/BAF45C, ACTL6B/BAF53B and actin. Component of the SWI/SNF-B (PBAF) chromatin remodeling complex, at least composed of SMARCA4/BRG1, SMARCB1/BAF47/SNF5, ACTL6A/BAF53A or ACTL6B/BAF53B, SMARCE1/BAF57, SMARCD1/BAF60A, SMARCD2/BAF60B, perhaps SMARCD3/BAF60C, SMARCC1/BAF155, SMARCC2/BAF170, PBRM1/BAF180, ARID2/BAF200 and actin. Binds to double-stranded DNA. Interacts with CEBPB (when not methylated). Interacts with PIH1D1. Interacts with MYK and MAEL. Interacts with PPP1R15A. Interacts with DPF2. Interacts with YWHAZ. Interacts with ERCC6. Interacts with FOS, FOSB isoform 1 and 2, FOSL1 and FOSL2. (Microbial infection) Binds tightly to the human immunodeficiency virus-type 1 (HIV-1) integrase in vitro and stimulates its DNA-joining activity. Interacts with human papillomavirus 18 E1 protein to stimulate its viral replication. Interacts with Epstein-Barr virus protein EBNA-2.

It is found in the nucleus. Functionally, core component of the BAF (hSWI/SNF) complex. This ATP-dependent chromatin-remodeling complex plays important roles in cell proliferation and differentiation, in cellular antiviral activities and inhibition of tumor formation. The BAF complex is able to create a stable, altered form of chromatin that constrains fewer negative supercoils than normal. This change in supercoiling would be due to the conversion of up to one-half of the nucleosomes on polynucleosomal arrays into asymmetric structures, termed altosomes, each composed of 2 histones octamers. Stimulates in vitro the remodeling activity of SMARCA4/BRG1/BAF190A. Involved in activation of CSF1 promoter. Belongs to the neural progenitors-specific chromatin remodeling complex (npBAF complex) and the neuron-specific chromatin remodeling complex (nBAF complex). During neural development a switch from a stem/progenitor to a postmitotic chromatin remodeling mechanism occurs as neurons exit the cell cycle and become committed to their adult state. The transition from proliferating neural stem/progenitor cells to postmitotic neurons requires a switch in subunit composition of the npBAF and nBAF complexes. As neural progenitors exit mitosis and differentiate into neurons, npBAF complexes which contain ACTL6A/BAF53A and PHF10/BAF45A, are exchanged for homologous alternative ACTL6B/BAF53B and DPF1/BAF45B or DPF3/BAF45C subunits in neuron-specific complexes (nBAF). The npBAF complex is essential for the self-renewal/proliferative capacity of the multipotent neural stem cells. The nBAF complex along with CREST plays a role regulating the activity of genes essential for dendrite growth. Plays a key role in cell-cycle control and causes cell cycle arrest in G0/G1. This chain is SWI/SNF-related matrix-associated actin-dependent regulator of chromatin subfamily B member 1 (SMARCB1), found in Homo sapiens (Human).